The sequence spans 947 residues: Bifunctional glutamine synthetase adenylyltransferase/adenylyl-removing enzyme (947 aa).

Residues 1–440 (MTPLSSPLSQ…VFNELIGDDE (440 aa)) are adenylyl removase. The segment at 450–947 (SEPWREVWQD…ASWRKWLVAV (498 aa)) is adenylyl transferase.

This sequence belongs to the GlnE family. It depends on Mg(2+) as a cofactor.

The enzyme catalyses [glutamine synthetase]-O(4)-(5'-adenylyl)-L-tyrosine + phosphate = [glutamine synthetase]-L-tyrosine + ADP. The catalysed reaction is [glutamine synthetase]-L-tyrosine + ATP = [glutamine synthetase]-O(4)-(5'-adenylyl)-L-tyrosine + diphosphate. Functionally, involved in the regulation of glutamine synthetase GlnA, a key enzyme in the process to assimilate ammonia. When cellular nitrogen levels are high, the C-terminal adenylyl transferase (AT) inactivates GlnA by covalent transfer of an adenylyl group from ATP to specific tyrosine residue of GlnA, thus reducing its activity. Conversely, when nitrogen levels are low, the N-terminal adenylyl removase (AR) activates GlnA by removing the adenylyl group by phosphorolysis, increasing its activity. The regulatory region of GlnE binds the signal transduction protein PII (GlnB) which indicates the nitrogen status of the cell. This Salmonella agona (strain SL483) protein is Bifunctional glutamine synthetase adenylyltransferase/adenylyl-removing enzyme.